The primary structure comprises 176 residues: Dual-action ribosomal maturation protein DarP (176 aa).

This sequence belongs to the DarP family.

The protein localises to the cytoplasm. Member of a network of 50S ribosomal subunit biogenesis factors which assembles along the 30S-50S interface, preventing incorrect 23S rRNA structures from forming. Promotes peptidyl transferase center (PTC) maturation. The polypeptide is Dual-action ribosomal maturation protein DarP (Aliivibrio fischeri (strain MJ11) (Vibrio fischeri)).